The following is an 861-amino-acid chain: Probable linoleate 9S-lipoxygenase 7 (861 aa).

In terms of domain architecture, PLAT spans 29 to 160 (NVLDFTDLAG…NYKSDRIFFA (132 aa)). The Lipoxygenase domain occupies 163-861 (PYLPSETPEL…GKGIPNSVSI (699 aa)). A disordered region spans residues 220-246 (TLGGSAEYPYPRRGRTGRPPTRTDPKS). The Fe cation site is built by H522, H527, H713, N717, and I861.

The protein belongs to the lipoxygenase family. As to quaternary structure, monomer. Fe cation serves as cofactor. Expressed in tubers. Detected in sprouts and flowers. but not in leaves or stems.

It localises to the cytoplasm. The enzyme catalyses (9Z,12Z)-octadecadienoate + O2 = (9S)-hydroperoxy-(10E,12Z)-octadecadienoate. Its pathway is lipid metabolism; oxylipin biosynthesis. Functionally, plant lipoxygenases may be involved in a number of diverse aspects of plant physiology including growth and development, pest resistance, and senescence or responses to wounding. Catalyzes the hydroperoxidation of lipids containing a cis,cis-1,4-pentadiene structure. The chain is Probable linoleate 9S-lipoxygenase 7 (LOX1.7) from Solanum tuberosum (Potato).